The primary structure comprises 795 residues: Protocadherin beta-4 (795 aa).

Positions 1–27 (MKKLGRIHPNRQVLAFILMVFLSQVRL) are cleaved as a signal peptide. Residues 28-689 (EPIRYSVLEE…SQADSLTVYL (662 aa)) lie on the Extracellular side of the membrane. Cadherin domains are found at residues 34–132 (VLEE…SPVF), 137–241 (VLLK…APEF), 246–346 (YGVQ…PPEL), 351–450 (LTSS…APAF), and 455–560 (YTLF…SPFV). N-linked (GlcNAc...) asparagine glycosylation occurs at Asn-183. The N-linked (GlcNAc...) asparagine glycan is linked to Asn-417. An N-linked (GlcNAc...) asparagine glycan is attached at Asn-566. In terms of domain architecture, Cadherin 6 spans 567 to 670 (GSAPCTELVP…LVDGFSQPYL (104 aa)). Residues 690–710 (VVALASVSSLFLFSVLLFVAV) traverse the membrane as a helical segment. At 711–795 (RLCRRSRAAS…PKFRNSLVFS (85 aa)) the chain is on the cytoplasmic side.

It localises to the cell membrane. Its function is as follows. Potential calcium-dependent cell-adhesion protein. May be involved in the establishment and maintenance of specific neuronal connections in the brain. This Pan troglodytes (Chimpanzee) protein is Protocadherin beta-4 (PCDHB4).